We begin with the raw amino-acid sequence, 227 residues long: Ribosomal RNA large subunit methyltransferase E (227 aa).

S-adenosyl-L-methionine contacts are provided by glycine 78, tryptophan 80, aspartate 103, aspartate 119, and aspartate 143. Lysine 183 (proton acceptor) is an active-site residue.

It belongs to the class I-like SAM-binding methyltransferase superfamily. RNA methyltransferase RlmE family.

The protein resides in the cytoplasm. It catalyses the reaction uridine(2552) in 23S rRNA + S-adenosyl-L-methionine = 2'-O-methyluridine(2552) in 23S rRNA + S-adenosyl-L-homocysteine + H(+). Functionally, specifically methylates the uridine in position 2552 of 23S rRNA at the 2'-O position of the ribose in the fully assembled 50S ribosomal subunit. This Rickettsia canadensis (strain McKiel) protein is Ribosomal RNA large subunit methyltransferase E.